A 205-amino-acid chain; its full sequence is Metalloproteinase inhibitor 1 (205 aa).

The first 24 residues, 1–24 (MMAPFASLASGILLLLSLIASSKA), serve as a signal peptide directing secretion. Residue C25 participates in Zn(2+) binding. Residues 25 to 28 (CSCA) form an involved in metalloproteinase-binding region. 6 disulfides stabilise this stretch: C25–C94, C27–C123, C37–C148, C151–C197, C156–C161, and C169–C189. Positions 25-148 (CSCAPPHPQT…AFSKTYSAGC (124 aa)) constitute an NTR domain. N54 carries an N-linked (GlcNAc...) asparagine glycan. Residues 91–92 (ES) are involved in metalloproteinase-binding. N-linked (GlcNAc...) asparagine glycosylation occurs at N102. A Phosphoserine modification is found at S179.

The protein belongs to the protease inhibitor I35 (TIMP) family. In terms of assembly, interacts with MMP1, MMP3, MMP10 and MMP13, but has only very low affinity for MMP14. Interacts with CD63; identified in a complex with CD63 and ITGB1. The activity of TIMP1 is dependent on the presence of disulfide bonds. In terms of processing, N-glycosylated. Found in fetal and adult tissues. Highest levels are found in bone. Also found in lung, ovary and uterus.

It is found in the secreted. In terms of biological role, metalloproteinase inhibitor that functions by forming one to one complexes with target metalloproteinases, such as collagenases, and irreversibly inactivates them by binding to their catalytic zinc cofactor. Acts on MMP1, MMP2, MMP3, MMP7, MMP8, MMP9, MMP10, MMP11, MMP12, MMP13 and MMP16. Does not act on MMP14. Also functions as a growth factor that regulates cell differentiation, migration and cell death and activates cellular signaling cascades via CD63 and ITGB1. Plays a role in integrin signaling. The sequence is that of Metalloproteinase inhibitor 1 (Timp1) from Mus musculus (Mouse).